Consider the following 145-residue polypeptide: Large ribosomal subunit protein uL13 (145 aa).

Belongs to the universal ribosomal protein uL13 family. Part of the 50S ribosomal subunit.

This protein is one of the early assembly proteins of the 50S ribosomal subunit, although it is not seen to bind rRNA by itself. It is important during the early stages of 50S assembly. This is Large ribosomal subunit protein uL13 from Bacillus cereus (strain G9842).